The primary structure comprises 354 residues: Dihydroorotate dehydrogenase (quinone) (354 aa).

FMN-binding positions include 61–65 and Ala85; that span reads AGYDK. A substrate-binding site is contributed by Lys65. Residue 110–114 participates in substrate binding; the sequence is NRFGF. Residues Asn139 and Asn170 each coordinate FMN. Asn170 is a binding site for substrate. The active-site Nucleophile is the Ser173. Asn175 lines the substrate pocket. Lys211 and Thr239 together coordinate FMN. 240-241 serves as a coordination point for substrate; it reads NT. Residues Gly261, Gly290, and 311 to 312 contribute to the FMN site; that span reads YT.

This sequence belongs to the dihydroorotate dehydrogenase family. Type 2 subfamily. In terms of assembly, monomer. The cofactor is FMN.

It is found in the cell membrane. The enzyme catalyses (S)-dihydroorotate + a quinone = orotate + a quinol. Its pathway is pyrimidine metabolism; UMP biosynthesis via de novo pathway; orotate from (S)-dihydroorotate (quinone route): step 1/1. Functionally, catalyzes the conversion of dihydroorotate to orotate with quinone as electron acceptor. This is Dihydroorotate dehydrogenase (quinone) from Cereibacter sphaeroides (strain ATCC 17023 / DSM 158 / JCM 6121 / CCUG 31486 / LMG 2827 / NBRC 12203 / NCIMB 8253 / ATH 2.4.1.) (Rhodobacter sphaeroides).